The primary structure comprises 173 residues: Protein GrpE (173 aa).

Residues 1-28 (MTEEEKTKSEAEEIEQNNKEEEQEKSVE) are compositionally biased toward basic and acidic residues. The disordered stretch occupies residues 1–30 (MTEEEKTKSEAEEIEQNNKEEEQEKSVEEL).

Belongs to the GrpE family. Homodimer.

It localises to the cytoplasm. In terms of biological role, participates actively in the response to hyperosmotic and heat shock by preventing the aggregation of stress-denatured proteins, in association with DnaK and GrpE. It is the nucleotide exchange factor for DnaK and may function as a thermosensor. Unfolded proteins bind initially to DnaJ; upon interaction with the DnaJ-bound protein, DnaK hydrolyzes its bound ATP, resulting in the formation of a stable complex. GrpE releases ADP from DnaK; ATP binding to DnaK triggers the release of the substrate protein, thus completing the reaction cycle. Several rounds of ATP-dependent interactions between DnaJ, DnaK and GrpE are required for fully efficient folding. The polypeptide is Protein GrpE (Methanosphaera stadtmanae (strain ATCC 43021 / DSM 3091 / JCM 11832 / MCB-3)).